The following is a 212-amino-acid chain: MAETKEFKTLYNLFIDSYLQKLAQHSIPTNVTCAIHIGEVIGQFKNCALRITNKCMSNSRLSFTLMVESFIEVISLLPEKDRRAIAEEIGIDLDDVPSAVSKLEKNCNAYAEVNNIIDIQKLDIGECSAPPGQHMLLQIVNTGSAEANCGLQTIVKSLNKIYVPPIIENRLPYYDPWFLVGVAIILVIFTVAICSIRRNLALKYRYGTFLYV.

Residues 1–175 (MAETKEFKTL…IIENRLPYYD (175 aa)) are Virion surface-facing. 3 disulfide bridges follow: C33/C55, C47/C127, and C107/C149. A helical membrane pass occupies residues 176–196 (PWFLVGVAIILVIFTVAICSI). The Intravirion portion of the chain corresponds to 197-212 (RRNLALKYRYGTFLYV).

Belongs to the orthopoxvirus OPG053 family. In terms of assembly, component of the entry fusion complex (EFC) composed of OPG053, OPG076, OPG086, OPG094, OPG095, OPG099, OPG107, OPG143, OPG104, OPG147 and OPG155. Except for OPG095 and OPG052, each of the EFC proteins is required for assembly or stability of the complex. In terms of processing, disulfid bonds are oxidized in the cytoplasm by OPG088 protein. Unglycosylated because produced in viral factories instead of the classic ER -Golgi route.

Its subcellular location is the virion membrane. Its function is as follows. Component of the entry fusion complex (EFC), which consists of 11 proteins. During cell infection, this complex mediates entry of the virion core into the host cytoplasm by a two-step mechanism consisting of lipid mixing of the viral and cellular membranes and subsequent pore formation. This Homo sapiens (Human) protein is EFC-associated protein OPG053 (OPG053).